Here is a 463-residue protein sequence, read N- to C-terminus: Chromosomal replication initiator protein DnaA (463 aa).

Positions 1–90 are domain I, interacts with DnaA modulators; it reads MSLSLWQQCL…KPLSQIISQT (90 aa). The interval 91-126 is domain II; it reads VTASVSAPSAPIVRVAAPSRPSWDNAAPQPELSYRS. Positions 127-343 are domain III, AAA+ region; the sequence is NVNPKHTFDN…GALNRVIANA (217 aa). ATP is bound by residues glycine 171, glycine 173, lysine 174, and threonine 175. Residues 344 to 463 form a domain IV, binds dsDNA region; the sequence is NFTGRAITID…FSNLIRTLSS (120 aa).

It belongs to the DnaA family. In terms of assembly, oligomerizes as a right-handed, spiral filament on DNA at oriC.

Its subcellular location is the cytoplasm. Its function is as follows. Plays an essential role in the initiation and regulation of chromosomal replication. ATP-DnaA binds to the origin of replication (oriC) to initiate formation of the DNA replication initiation complex once per cell cycle. Binds the DnaA box (a 9 base pair repeat at the origin) and separates the double-stranded (ds)DNA. Forms a right-handed helical filament on oriC DNA; dsDNA binds to the exterior of the filament while single-stranded (ss)DNA is stabiized in the filament's interior. The ATP-DnaA-oriC complex binds and stabilizes one strand of the AT-rich DNA unwinding element (DUE), permitting loading of DNA polymerase. After initiation quickly degrades to an ADP-DnaA complex that is not apt for DNA replication. Binds acidic phospholipids. The polypeptide is Chromosomal replication initiator protein DnaA (Serratia proteamaculans (strain 568)).